The sequence spans 443 residues: Probable glycine dehydrogenase (decarboxylating) subunit 1 (443 aa).

The protein belongs to the GcvP family. N-terminal subunit subfamily. In terms of assembly, the glycine cleavage system is composed of four proteins: P, T, L and H. In this organism, the P 'protein' is a heterodimer of two subunits.

The enzyme catalyses N(6)-[(R)-lipoyl]-L-lysyl-[glycine-cleavage complex H protein] + glycine + H(+) = N(6)-[(R)-S(8)-aminomethyldihydrolipoyl]-L-lysyl-[glycine-cleavage complex H protein] + CO2. Its function is as follows. The glycine cleavage system catalyzes the degradation of glycine. The P protein binds the alpha-amino group of glycine through its pyridoxal phosphate cofactor; CO(2) is released and the remaining methylamine moiety is then transferred to the lipoamide cofactor of the H protein. The chain is Probable glycine dehydrogenase (decarboxylating) subunit 1 from Maridesulfovibrio salexigens (strain ATCC 14822 / DSM 2638 / NCIMB 8403 / VKM B-1763) (Desulfovibrio salexigens).